An 80-amino-acid polypeptide reads, in one-letter code: DNA-directed RNA polymerase RPB10 homolog (80 aa).

Residues cysteine 7, cysteine 10, cysteine 65, and cysteine 66 each coordinate Zn(2+).

Belongs to the archaeal RpoN/eukaryotic RPB10 RNA polymerase subunit family. As to quaternary structure, part of the viral DNA-directed RNA polymerase that consists of 8 polII-like subunits (RPB1, RPB2, RPB3, RPB5, RPB6, RPB7, RPB9, RPB10), a capping enzyme and a termination factor.

It localises to the host cytoplasm. Its function is as follows. Component of the DNA-directed RNA polymerase (RNAP) that catalyzes the transcription in the cytoplasm of viral DNA into RNA using the four ribonucleoside triphosphates as substrates. The chain is DNA-directed RNA polymerase RPB10 homolog from African swine fever virus (strain Badajoz 1971 Vero-adapted) (Ba71V).